Consider the following 269-residue polypeptide: Eukaryotic translation initiation factor 3 subunit G-1 (269 aa).

The 79-residue stretch at 188–266 (AAIRISNLSE…LILSVEWSKP (79 aa)) folds into the RRM domain. Serine 198 is subject to Phosphoserine.

It belongs to the eIF-3 subunit G family. Component of the eukaryotic translation initiation factor 3 (eIF-3) complex. The eIF-3 complex interacts with pix.

It localises to the cytoplasm. Functionally, RNA-binding component of the eukaryotic translation initiation factor 3 (eIF-3) complex, which is involved in protein synthesis of a specialized repertoire of mRNAs and, together with other initiation factors, stimulates binding of mRNA and methionyl-tRNAi to the 40S ribosome. The eIF-3 complex specifically targets and initiates translation of a subset of mRNAs involved in cell proliferation. This subunit can bind 18S rRNA. In Drosophila melanogaster (Fruit fly), this protein is Eukaryotic translation initiation factor 3 subunit G-1.